We begin with the raw amino-acid sequence, 1791 residues long: Protein TIC 214 (1791 aa).

A run of 6 helical transmembrane segments spans residues 19–39 (IINS…FSIG), 68–88 (FIAG…HLAL), 91–111 (PHTI…WNNH), 133–153 (VFLN…SSML), 176–196 (VGWL…LVWI), and 227–247 (IFSI…PSPI). The interval 1492 to 1511 (ASQVELESDKENKKNPESAL) is disordered. The span at 1498-1511 (ESDKENKKNPESAL) shows a compositional bias: basic and acidic residues.

This sequence belongs to the TIC214 family. In terms of assembly, part of the Tic complex.

The protein resides in the plastid. It localises to the chloroplast inner membrane. In terms of biological role, involved in protein precursor import into chloroplasts. May be part of an intermediate translocation complex acting as a protein-conducting channel at the inner envelope. This is Protein TIC 214 from Barbarea verna (Land cress).